Consider the following 500-residue polypeptide: Lysine--tRNA ligase (500 aa).

Positions 410 and 417 each coordinate Mg(2+).

It belongs to the class-II aminoacyl-tRNA synthetase family. As to quaternary structure, homodimer. It depends on Mg(2+) as a cofactor.

It localises to the cytoplasm. The catalysed reaction is tRNA(Lys) + L-lysine + ATP = L-lysyl-tRNA(Lys) + AMP + diphosphate. The chain is Lysine--tRNA ligase from Shewanella frigidimarina (strain NCIMB 400).